Consider the following 196-residue polypeptide: UPF0319 protein VV1_0237 (196 aa).

The signal sequence occupies residues 1 to 19 (MKKMMILSALALFSSSLFA).

This sequence belongs to the UPF0319 family.

The chain is UPF0319 protein VV1_0237 from Vibrio vulnificus (strain CMCP6).